We begin with the raw amino-acid sequence, 125 residues long: MSEKKNIYPNKEGCPVEFTLDVIGGKWKGILFYHMIDGKKRFNEFRRICPSITQRMLTLQLRELEADGIVHREVYHQVPPKVEYSLTEFGRTLEPIVLQMKEWGESNRDVLESYRSNGLVKDQQK.

In terms of domain architecture, HTH hxlR-type spans 14–112; sequence CPVEFTLDVI…WGESNRDVLE (99 aa).

This is an uncharacterized protein from Bacillus subtilis (strain 168).